The chain runs to 1576 residues: Spermatogenesis-associated protein 31D1 (1576 aa).

A helical membrane pass occupies residues 29-49 (FICLSGLGLFILYLFYVVLTL). Disordered stretches follow at residues 170–197 (FTLA…PPPP), 542–572 (HESP…QGQS), 782–801 (KDHL…RSNS), 952–1033 (SQGD…TDFQ), and 1293–1347 (RVSP…PPPE). A compositionally biased stretch (pro residues) spans 546-565 (VLPPPQPLSLPSTQPLPLPQ). The span at 966–980 (RSTFQGEKLGTTSSV) shows a compositional bias: polar residues. Positions 1004 to 1019 (QFSDTDHDLIETDSKD) are enriched in basic and acidic residues. Residues 1020–1032 (GASTSLRRGTTDF) are compositionally biased toward polar residues.

This sequence belongs to the SPATA31 family.

It localises to the membrane. May play a role in spermatogenesis. The chain is Spermatogenesis-associated protein 31D1 (SPATA31D1) from Homo sapiens (Human).